The sequence spans 281 residues: Apulose-4-phosphate transketolase subunit A (281 aa).

Belongs to the transketolase family. As to quaternary structure, probable heterodimer composed of AptA and AptB. It depends on thiamine diphosphate as a cofactor.

The enzyme catalyses apulose 4-phosphate + D-glyceraldehyde 3-phosphate = D-xylulose 5-phosphate + dihydroxyacetone phosphate. It functions in the pathway carbohydrate metabolism. Its function is as follows. Involved in catabolism of D-apiose. Catalyzes the transfer of the glycolaldehyde group from apulose-4-phosphate to D-glyceraldehyde 3-phosphate, generating dihydroxyacetone phosphate and D-xylulose-5-phosphate. The polypeptide is Apulose-4-phosphate transketolase subunit A (Phocaeicola vulgatus (strain ATCC 8482 / DSM 1447 / JCM 5826 / CCUG 4940 / NBRC 14291 / NCTC 11154) (Bacteroides vulgatus)).